Reading from the N-terminus, the 159-residue chain is Ribosomal RNA large subunit methyltransferase H (159 aa).

Residues L76, G108, and 127–132 (FSKMTF) contribute to the S-adenosyl-L-methionine site.

The protein belongs to the RNA methyltransferase RlmH family. Homodimer.

Its subcellular location is the cytoplasm. It carries out the reaction pseudouridine(1915) in 23S rRNA + S-adenosyl-L-methionine = N(3)-methylpseudouridine(1915) in 23S rRNA + S-adenosyl-L-homocysteine + H(+). Specifically methylates the pseudouridine at position 1915 (m3Psi1915) in 23S rRNA. This chain is Ribosomal RNA large subunit methyltransferase H, found in Shouchella clausii (strain KSM-K16) (Alkalihalobacillus clausii).